The following is a 1097-amino-acid chain: Transmembrane protein 132D (1097 aa).

The signal sequence occupies residues 1–30 (MCPSEMGTLWYLWSPVLISLAALFSKVTEG). Topologically, residues 31-913 (RGILESIQRF…PDQAAKGLSD (883 aa)) are extracellular. Positions 233-245 (DERGDCAKEDSRK) are enriched in basic and acidic residues. Disordered regions lie at residues 233–263 (DERG…SPPL) and 885–906 (SFPD…DPDQ). The helical transmembrane segment at 914–934 (LEIGMYALLGVFCLAILVFLI) threads the bilayer. The Cytoplasmic segment spans residues 935 to 1097 (NCVTFALKYR…SCMERLHEHV (163 aa)). The segment at 1021–1042 (MLTDDKEQKSEPPTSPTSKRKR) is disordered.

The protein belongs to the TMEM132 family. As to expression, expressed in mature oligodendrocytes in the brain.

The protein localises to the membrane. Regulates neuronal morphology via inhibition of the WAVE regulatory complex (WCR), a complex that controls F-actin cytoskeletal dynamics. This is Transmembrane protein 132D (Tmem132d) from Rattus norvegicus (Rat).